Reading from the N-terminus, the 252-residue chain is Triosephosphate isomerase (252 aa).

Substrate is bound at residue 10-12 (NWK). H96 acts as the Electrophile in catalysis. Catalysis depends on E168, which acts as the Proton acceptor. Residues G174, S214, and 235–236 (GG) contribute to the substrate site.

This sequence belongs to the triosephosphate isomerase family. As to quaternary structure, homodimer.

It localises to the cytoplasm. The enzyme catalyses D-glyceraldehyde 3-phosphate = dihydroxyacetone phosphate. The protein operates within carbohydrate biosynthesis; gluconeogenesis. It participates in carbohydrate degradation; glycolysis; D-glyceraldehyde 3-phosphate from glycerone phosphate: step 1/1. Its function is as follows. Involved in the gluconeogenesis. Catalyzes stereospecifically the conversion of dihydroxyacetone phosphate (DHAP) to D-glyceraldehyde-3-phosphate (G3P). This chain is Triosephosphate isomerase, found in Streptococcus pyogenes serotype M18 (strain MGAS8232).